The sequence spans 317 residues: E3 ubiquitin-protein ligase NRDP1 (317 aa).

Residues 18–57 (CPICSGVLEEPVQAPHCEHAFCNACITQWFSQQQTCPVDR) form an RING-type; degenerate zinc finger. Residues 135–175 (IKHLRSVVQQQQIRIGELEKTAAESKHQLSEQKRDIQLLKA) adopt a coiled-coil conformation.

It catalyses the reaction S-ubiquitinyl-[E2 ubiquitin-conjugating enzyme]-L-cysteine + [acceptor protein]-L-lysine = [E2 ubiquitin-conjugating enzyme]-L-cysteine + N(6)-ubiquitinyl-[acceptor protein]-L-lysine.. It participates in protein modification; protein ubiquitination. Functionally, acts as E3 ubiquitin-protein ligase and regulates the degradation of target proteins. The polypeptide is E3 ubiquitin-protein ligase NRDP1 (rnf41) (Xenopus laevis (African clawed frog)).